The chain runs to 517 residues: General transcription factor IIF subunit 1 (517 aa).

Ala-2 is subject to N-acetylalanine. Thr-156 is modified (phosphothreonine). A disordered region spans residues 178–466 (QQRRLKDQDQ…DAVRRYLTRK (289 aa)). 4 positions are modified to phosphoserine: Ser-217, Ser-218, Ser-221, and Ser-224. Basic residues predominate over residues 232 to 251 (PKAKKKAPLAKGGRKKKKKK). 2 stretches are compositionally biased toward acidic residues: residues 255–270 (DEAF…EGQE) and 303–325 (EQSD…EEEE). Position 331 is a phosphothreonine (Thr-331). The span at 343–355 (EESDSSEESDIDS) shows a compositional bias: acidic residues. Residues 364–374 (AKKKTPPKRER) show a composition bias toward basic residues. Phosphoserine occurs at positions 377, 380, 381, and 385. Residues 377–391 (SGGSSRGNSRPGTPS) show a composition bias toward low complexity. Residue Thr-389 is modified to Phosphothreonine. Ser-391 carries the post-translational modification Phosphoserine. An N6-acetyllysine modification is found at Lys-407. The span at 428 to 452 (GPQSLSGKSTPQPPSGKTTPNSGDV) shows a compositional bias: polar residues. Ser-431, Ser-433, and Ser-436 each carry phosphoserine. Thr-437 and Thr-446 each carry phosphothreonine. Ser-449 carries the phosphoserine modification. Zn(2+) is bound by residues Glu-503, His-512, and Glu-517.

It belongs to the TFIIF alpha subunit family. As to quaternary structure, heterodimer of an alpha and a beta subunit. Interacts with GTF2F2, CTDP1, TAF6/TAFII80 and URI1. Interacts with GTF2B (via C-terminus and preferentially via acetylated form); this interaction prevents binding of GTF2B to GTF2F2. Part of TBP-based Pol II pre-initiation complex (PIC), in which Pol II core assembles with general transcription factors and other specific initiation factors including GTF2E1, GTF2E2, GTF2F1, GTF2F2, TCEA1, ERCC2, ERCC3, GTF2H2, GTF2H3, GTF2H4, GTF2H5, GTF2A1, GTF2A2, GTF2B and TBP; this large multi-subunit PIC complex mediates DNA unwinding and targets Pol II core to the transcription start site where the first phosphodiester bond forms. In terms of processing, phosphorylated on Ser and other residues by TAF1 and casein kinase II-like kinases.

It is found in the nucleus. TFIIF is a general transcription initiation factor that binds to RNA polymerase II and helps to recruit it to the initiation complex in collaboration with TFIIB. It promotes transcription elongation. This is General transcription factor IIF subunit 1 (GTF2F1) from Homo sapiens (Human).